Here is a 138-residue protein sequence, read N- to C-terminus: Large ribosomal subunit protein uL16 (138 aa).

The protein belongs to the universal ribosomal protein uL16 family. Part of the 50S ribosomal subunit.

Its function is as follows. Binds 23S rRNA and is also seen to make contacts with the A and possibly P site tRNAs. The sequence is that of Large ribosomal subunit protein uL16 from Rhodospirillum rubrum (strain ATCC 11170 / ATH 1.1.1 / DSM 467 / LMG 4362 / NCIMB 8255 / S1).